Consider the following 287-residue polypeptide: Diaminopimelate epimerase (287 aa).

Substrate-binding residues include Asn-13, Gln-46, and Asn-66. Residue Cys-75 is the Proton donor of the active site. Substrate-binding positions include 76–77 (GN), Asn-166, Asn-199, and 217–218 (ER). The active-site Proton acceptor is Cys-226. Residue 227 to 228 (GT) coordinates substrate.

This sequence belongs to the diaminopimelate epimerase family. As to quaternary structure, homodimer.

Its subcellular location is the cytoplasm. The catalysed reaction is (2S,6S)-2,6-diaminopimelate = meso-2,6-diaminopimelate. Its pathway is amino-acid biosynthesis; L-lysine biosynthesis via DAP pathway; DL-2,6-diaminopimelate from LL-2,6-diaminopimelate: step 1/1. Catalyzes the stereoinversion of LL-2,6-diaminopimelate (L,L-DAP) to meso-diaminopimelate (meso-DAP), a precursor of L-lysine and an essential component of the bacterial peptidoglycan. This is Diaminopimelate epimerase from Paraburkholderia xenovorans (strain LB400).